Consider the following 190-residue polypeptide: Elongation factor P (190 aa).

It belongs to the elongation factor P family.

It localises to the cytoplasm. It functions in the pathway protein biosynthesis; polypeptide chain elongation. Its function is as follows. Involved in peptide bond synthesis. Stimulates efficient translation and peptide-bond synthesis on native or reconstituted 70S ribosomes in vitro. Probably functions indirectly by altering the affinity of the ribosome for aminoacyl-tRNA, thus increasing their reactivity as acceptors for peptidyl transferase. This chain is Elongation factor P, found in Amoebophilus asiaticus (strain 5a2).